Consider the following 587-residue polypeptide: 65-kDa microtubule-associated protein 1 (587 aa).

Coiled coils occupy residues 46–84, 151–181, 234–257, 290–317, and 461–489; these read QECL…TMSL, DESD…LRKV, LTLK…LIDL, ALAR…MKEI, and AMLD…VQEQ. Over residues 474-494 the composition is skewed to basic and acidic residues; it reads EEEKRRLREQKKVQEQPHVEQ. The tract at residues 474 to 587 is disordered; it reads EEEKRRLREQ…AADHQVPASP (114 aa). Position 503 is a phosphoserine (serine 503). At threonine 526 the chain carries Phosphothreonine. Over residues 531 to 542 the composition is skewed to polar residues; that stretch reads LSLNANQNGSRS. Serine 532 and serine 540 each carry phosphoserine. Threonine 543 and threonine 552 each carry phosphothreonine. The span at 543–553 shows a compositional bias: basic and acidic residues; it reads TAKEAGRRETL. Phosphoserine is present on residues serine 573, serine 576, and serine 586.

This sequence belongs to the MAP65/ASE1 family. Forms dimer. Binds to MT, mostly with coaligned MT, both between parallel or antiparallel, forming thick bundles. Interacts with the alpha-tubulin subunit of the tubulin heterodimer. Bundles polymerized MT via the formation of 25-nm crossbridges at specific stages of the cell cycle (e.g. bundles microtubules in interphase, anaphase and telophase but does not bind microtubules in prophase or metaphase), at the plus-end, the minus-end, or along the entire length of MT, and along phragmoplast MT. Interacts with SH3P1 and MPK4. Post-translationally, basal phosphorylation at all stages of the cell cycle. MT-binding properties inhibited by hyperphosphorylation mediated by CDKs and/or MAPKs (e.g. ANP2, ANP3, MPK4 and MPK6) during prometaphase and metaphase. Expressed in all organs and tissues with the exception of sepals and anthers. Bound to subsets of microtubules in the cells of root epidermis, hypocotyl and cotyledons (at protein level).

It is found in the nucleus. It localises to the cytoplasm. The protein localises to the cytoskeleton. The protein resides in the spindle. Its subcellular location is the phragmoplast. It is found in the cell cortex. Its function is as follows. Microtubule-associated protein that bundle and stabilize adjacent microtubules (MT) of the cell cortex. Enhances MT nucleation. Can also bind to tubulin dimers and promotes their polymerization. Confers MT resistance to the drug propyzamide and cold conditions. Plays a role in the central spindle at anaphase to early cytokinesis but is not essential at the midline of the phragmoplast at later stages. Represses metaphase spindle organization and the transition to anaphase in dephosphorylated active form. Promotes the formation of a planar network of antiparallel microtubules. May be involved in stomatal movement modulation by regulating the dynamic and arrangement of cortical MT. The chain is 65-kDa microtubule-associated protein 1 (MAP65-1) from Arabidopsis thaliana (Mouse-ear cress).